A 232-amino-acid polypeptide reads, in one-letter code: Lipoarabinomannan carrier protein LprG (232 aa).

Residues 1 to 21 (MQTRLTAILAAFLTAVALLAG) form the signal peptide. The N-palmitoyl cysteine moiety is linked to residue Cys-22. Residue Cys-22 is the site of S-diacylglycerol cysteine attachment.

Belongs to the LppX/LprAFG lipoprotein family. Post-translationally, modified by Lgt on Cys-22 with an S-linked diacylglyceral, signal peptide is removed by LspA, Cys-22 is further modifed with a fatty acid on its amino group by Lnt yielding a triacylated protein.

The protein resides in the cell inner membrane. Helps membrane protein MHAS_02168/C731_2106 (P55) transport triacylglycerides (TAG) across the inner cell membrane into the periplasm and probably ultimately to the outer membrane. Binds TAG in its hydrophobic cavity and transfers it between lipid bilayers. TAG probably regulates lipid metabolism and growth regulation and plays a structural role in the outer membrane. Also binds mannosides, lipoarabinomannan and lipomannan and various glycolipids in the same cavity. The lprG-MHAS_02167/C731_2107 operon complements the vancomycin sensitivity of an M.smegmatis knockout of the same operon. In Mycolicibacterium hassiacum (strain DSM 44199 / CIP 105218 / JCM 12690 / 3849) (Mycobacterium hassiacum), this protein is Lipoarabinomannan carrier protein LprG.